The following is a 532-amino-acid chain: Probable alpha-galactosidase A (532 aa).

The first 21 residues, 1–21 (MDTTKSLLSTLIAIMIPLSLG), serve as a signal peptide directing secretion. An intrachain disulfide couples Cys-44 to Cys-76. N-linked (GlcNAc...) asparagine glycans are attached at residues Asn-47, Asn-91, and Asn-121. Cys-124 and Cys-154 are joined by a disulfide. Asp-152 serves as the catalytic Nucleophile. A glycan (N-linked (GlcNAc...) asparagine) is linked at Asn-201. Asp-210 serves as the catalytic Proton donor. The Ricin B-type lectin domain occupies 410–531 (CSTVIPTGIV…GLPSGVDIKP (122 aa)). Intrachain disulfides connect Cys-427–Cys-441 and Cys-466–Cys-478.

Belongs to the glycosyl hydrolase 27 family.

It localises to the secreted. The enzyme catalyses Hydrolysis of terminal, non-reducing alpha-D-galactose residues in alpha-D-galactosides, including galactose oligosaccharides, galactomannans and galactolipids.. Functionally, hydrolyzes a variety of simple alpha-D-galactoside as well as more complex molecules such as oligosaccharides and polysaccharides. This chain is Probable alpha-galactosidase A (aglA), found in Aspergillus fumigatus (strain ATCC MYA-4609 / CBS 101355 / FGSC A1100 / Af293) (Neosartorya fumigata).